We begin with the raw amino-acid sequence, 339 residues long: Protein RecA (339 aa).

Residue 66–73 (GPESSGKT) coordinates ATP.

It belongs to the RecA family.

Its subcellular location is the cytoplasm. Its function is as follows. Can catalyze the hydrolysis of ATP in the presence of single-stranded DNA, the ATP-dependent uptake of single-stranded DNA by duplex DNA, and the ATP-dependent hybridization of homologous single-stranded DNAs. It interacts with LexA causing its activation and leading to its autocatalytic cleavage. The sequence is that of Protein RecA from Geobacter metallireducens (strain ATCC 53774 / DSM 7210 / GS-15).